The following is a 246-amino-acid chain: PARP-type zinc finger-containing protein C2A9.07c (246 aa).

Residues 8–99 (YRVELAKTGR…EKILRAFEQG (92 aa)) form a PARP-type; degenerate zinc finger. A compositionally biased stretch (basic and acidic residues) spans 103–126 (EEDEERCRKMASDASEEKDRKIEE). Residues 103 to 246 (EEDEERCRKM…ESGNEYSDSD (144 aa)) are disordered. T130 carries the post-translational modification Phosphothreonine. A Phosphoserine modification is found at S131. A compositionally biased stretch (basic residues) spans 157–168 (NKKHKAERKRSP). Positions 175-184 (LEDDEEIEDV) are enriched in acidic residues. The segment covering 185–196 (ASDKDEEEKPWS) has biased composition (basic and acidic residues). Residues 197-215 (GDEEDDDELVVKDSEDETE) show a composition bias toward acidic residues. S243 and S245 each carry phosphoserine.

The protein resides in the nucleus. The protein localises to the mitochondrion. In Schizosaccharomyces pombe (strain 972 / ATCC 24843) (Fission yeast), this protein is PARP-type zinc finger-containing protein C2A9.07c.